A 220-amino-acid chain; its full sequence is Large ribosomal subunit protein uL16 (220 aa).

The protein belongs to the universal ribosomal protein uL16 family. Component of the small ribosomal subunit. Mature ribosomes consist of a small (40S) and a large (60S) subunit. The 40S subunit contains about 33 different proteins and 1 molecule of RNA (18S). The 60S subunit contains about 49 different proteins and 3 molecules of RNA (25S, 5.8S and 5S).

In Zea mays (Maize), this protein is Large ribosomal subunit protein uL16 (RPL10).